The following is a 275-amino-acid chain: Gibberellin-regulated protein 14 (275 aa).

The N-terminal stretch at 1-21 is a signal peptide; that stretch reads MALSLLSVFIFFHVFTNVVFA. The interval 34 to 207 is disordered; that stretch reads PTPTLPSPSP…TAPPVKPPTP (174 aa). Residues 36–207 show a composition bias toward pro residues; sequence PTLPSPSPAT…TAPPVKPPTP (172 aa).

This sequence belongs to the GASA family. Six disulfide bonds may be present. Expressed in flower abscission zone, style, stamen filaments and lateral roots.

It localises to the secreted. Gibberellin-regulated protein that may function in hormonal controlled steps of development such as seed germination, flowering and seed maturation. The protein is Gibberellin-regulated protein 14 (GASA14) of Arabidopsis thaliana (Mouse-ear cress).